The chain runs to 310 residues: tRNA dimethylallyltransferase (310 aa).

14-21 contacts ATP; that stretch reads GPTASGKT. 16–21 lines the substrate pocket; sequence TASGKT. An interaction with substrate tRNA region spans residues 39 to 42; sequence DSMQ.

It belongs to the IPP transferase family. Monomer. The cofactor is Mg(2+).

It carries out the reaction adenosine(37) in tRNA + dimethylallyl diphosphate = N(6)-dimethylallyladenosine(37) in tRNA + diphosphate. Catalyzes the transfer of a dimethylallyl group onto the adenine at position 37 in tRNAs that read codons beginning with uridine, leading to the formation of N6-(dimethylallyl)adenosine (i(6)A). The chain is tRNA dimethylallyltransferase from Corynebacterium jeikeium (strain K411).